Reading from the N-terminus, the 164-residue chain is uncharacterized protein (164 aa).

The transit peptide at 1–60 directs the protein to the chloroplast; sequence MERSASVGVNDGRFGGNQFYSPSFSSSSSSSSMRHVNYSCGSCGYELNLSSTNRITSTIG.

The protein localises to the plastid. The protein resides in the chloroplast. This is an uncharacterized protein from Arabidopsis thaliana (Mouse-ear cress).